The following is a 444-amino-acid chain: ATP-dependent protease ATPase subunit HslU (444 aa).

Residues isoleucine 20 and 62-67 (GVGKTE) contribute to the ATP site. A disordered region spans residues 130–158 (EDRILDALVPPPRGASGEPERGEDNSARQ). Residues aspartate 257, glutamate 322, and arginine 394 each contribute to the ATP site.

The protein belongs to the ClpX chaperone family. HslU subfamily. As to quaternary structure, a double ring-shaped homohexamer of HslV is capped on each side by a ring-shaped HslU homohexamer. The assembly of the HslU/HslV complex is dependent on binding of ATP.

It localises to the cytoplasm. Functionally, ATPase subunit of a proteasome-like degradation complex; this subunit has chaperone activity. The binding of ATP and its subsequent hydrolysis by HslU are essential for unfolding of protein substrates subsequently hydrolyzed by HslV. HslU recognizes the N-terminal part of its protein substrates and unfolds these before they are guided to HslV for hydrolysis. This is ATP-dependent protease ATPase subunit HslU from Bordetella pertussis (strain Tohama I / ATCC BAA-589 / NCTC 13251).